The sequence spans 177 residues: Ubiquinol-cytochrome c reductase iron-sulfur subunit (177 aa).

A helical membrane pass occupies residues 18-38 (MVLTASSVAAVGAVCTLWPLV). The 88-residue stretch at 88–175 (ARAVKMSELI…YTFISDKKIR (88 aa)) folds into the Rieske domain. Residues cysteine 120, histidine 122, cysteine 139, and histidine 142 each contribute to the [2Fe-2S] cluster site. Cysteine 125 and cysteine 141 are oxidised to a cystine.

It belongs to the Rieske iron-sulfur protein family. The main subunits of complex b-c1 are: cytochrome b, cytochrome c1 and the Rieske protein. It depends on [2Fe-2S] cluster as a cofactor.

Its subcellular location is the cell membrane. The catalysed reaction is a quinol + 2 Fe(III)-[cytochrome c](out) = a quinone + 2 Fe(II)-[cytochrome c](out) + 2 H(+)(out). Component of the ubiquinol-cytochrome c reductase complex (complex III or cytochrome b-c1 complex), which is a respiratory chain that generates an electrochemical potential coupled to ATP synthesis. The protein is Ubiquinol-cytochrome c reductase iron-sulfur subunit (petA) of Rickettsia felis (strain ATCC VR-1525 / URRWXCal2) (Rickettsia azadi).